A 286-amino-acid chain; its full sequence is MDITGKTRVLGIIGWPVAHSLSPLMQNAALEAMGLDWIYVPFAVRPEDLASAVAGLRTLGVSGFNVTIPHKTAIIPLLDRITPEARLMGAVNTVKREGDDLVGYNTDGEGFIRSLAEDLGFVPAGRRILVLGAGGAARAAVASLARGGAATVMIANRSVARGEELVEAFQGVFGGTQFAAMPLDIPLINAEVQNFDLLVNTTSVGMGETAFEGLDISRMNPAASVYDMVYAPWETPLLAEASRGGRRCANGIGMLVAQGECALAIWTGMEPPPGIMRRRVLAALKR.

Residues 20 to 22 and threonine 67 each bind shikimate; that span reads SLS. Lysine 71 serves as the catalytic Proton acceptor. The shikimate site is built by asparagine 92 and aspartate 107. Residues 132–136 and methionine 228 each bind NADP(+); that span reads GAGGA. Tyrosine 230 lines the shikimate pocket. Glycine 251 is an NADP(+) binding site.

Belongs to the shikimate dehydrogenase family. As to quaternary structure, homodimer.

It carries out the reaction shikimate + NADP(+) = 3-dehydroshikimate + NADPH + H(+). Its pathway is metabolic intermediate biosynthesis; chorismate biosynthesis; chorismate from D-erythrose 4-phosphate and phosphoenolpyruvate: step 4/7. Functionally, involved in the biosynthesis of the chorismate, which leads to the biosynthesis of aromatic amino acids. Catalyzes the reversible NADPH linked reduction of 3-dehydroshikimate (DHSA) to yield shikimate (SA). The protein is Shikimate dehydrogenase (NADP(+)) of Geobacter metallireducens (strain ATCC 53774 / DSM 7210 / GS-15).